Consider the following 327-residue polypeptide: Ornithine carbamoyltransferase, mitochondrial (327 aa).

Residues 63–66 (STRT), Arg-114, His-141, and Gln-144 each bind carbamoyl phosphate. L-ornithine contacts are provided by Asn-172, Asp-236, Ser-240, and Met-241. Cys-276 functions as the Proton acceptor in the catalytic mechanism. Carbamoyl phosphate contacts are provided by residues 276–277 (CL) and Arg-303.

Belongs to the aspartate/ornithine carbamoyltransferase superfamily. OTCase family. As to quaternary structure, interacts with trx2.

It localises to the mitochondrion matrix. It carries out the reaction carbamoyl phosphate + L-ornithine = L-citrulline + phosphate + H(+). The protein operates within amino-acid biosynthesis; L-arginine biosynthesis; L-arginine from L-ornithine and carbamoyl phosphate: step 1/3. In terms of biological role, ornithine carbamoyltransferase involved in the synthesis of arginine from glutamate via ornithine and the urea cycle. The protein is Ornithine carbamoyltransferase, mitochondrial (arg3) of Schizosaccharomyces pombe (strain 972 / ATCC 24843) (Fission yeast).